The chain runs to 611 residues: Sensor histidine kinase WalK (611 aa).

Residues 1–13 (MNKVGFFRSIQFK) lie on the Cytoplasmic side of the membrane. A helical membrane pass occupies residues 14 to 34 (ITLIYVLLIIIAMQIIGVYFV). Over 35–182 (NQVEKSLISS…VFNQMKTINT (148 aa)) the chain is Extracellular. A helical transmembrane segment spans residues 183–203 (ILASGTGLALVLTALLGIFLA). Residues 204 to 256 (RTITHPLSDMRKQAMELAKGNFSRKVKKYGHDEIGQLATTFNHLTRELEDAQA) form the HAMP domain. The Cytoplasmic portion of the chain corresponds to 204–611 (RTITHPLSDM…EEQEDDWDEA (408 aa)). One can recognise a PAS domain in the interval 263 to 324 (RKLASVIAYM…QENYTFEDLV (62 aa)). Positions 325–379 (EQQDSMLLEIERDDELTVLRVNFSVIQREHGKIDGLIAVIYDVTEQEKMDQERRE) constitute a PAC domain. The Histidine kinase domain occupies 383-602 (NVSHELRTPL…TITFTLPYKE (220 aa)). His-386 bears the Phosphohistidine; by autocatalysis mark.

In terms of assembly, homodimer. Interacts with YycH and YycI. Autophosphorylated.

It localises to the cell membrane. The catalysed reaction is ATP + protein L-histidine = ADP + protein N-phospho-L-histidine.. Its function is as follows. Member of the two-component regulatory system WalK/WalR involved in the regulation of the ftsAZ operon, the yocH and ykvT, cwlO, lytE, ydjM, yjeA, yoeB genes and the tagAB and tagDEF operons. Phosphorylates WalR. In Bacillus subtilis (strain 168), this protein is Sensor histidine kinase WalK.